The chain runs to 87 residues: Large ribosomal subunit protein eL31 (87 aa).

This sequence belongs to the eukaryotic ribosomal protein eL31 family.

The protein is Large ribosomal subunit protein eL31 of Methanocorpusculum labreanum (strain ATCC 43576 / DSM 4855 / Z).